A 503-amino-acid chain; its full sequence is Cytochrome P450 11B1, mitochondrial (503 aa).

A mitochondrion-targeting transit peptide spans 1-24; sequence MAIWAKAEAWLAGPWLALNRARTL. Position 450 (C450) interacts with heme.

The protein belongs to the cytochrome P450 family. Heme is required as a cofactor.

Its subcellular location is the mitochondrion inner membrane. It catalyses the reaction a steroid + 2 reduced [adrenodoxin] + O2 + 2 H(+) = an 11beta-hydroxysteroid + 2 oxidized [adrenodoxin] + H2O. It carries out the reaction 11-deoxycortisol + 2 reduced [adrenodoxin] + O2 + 2 H(+) = cortisol + 2 oxidized [adrenodoxin] + H2O. The catalysed reaction is 21-hydroxyprogesterone + 2 reduced [adrenodoxin] + O2 + 2 H(+) = corticosterone + 2 oxidized [adrenodoxin] + H2O. The enzyme catalyses corticosterone + 2 reduced [adrenodoxin] + O2 + 2 H(+) = 18-hydroxycorticosterone + 2 oxidized [adrenodoxin] + H2O. It catalyses the reaction 18-hydroxycorticosterone + 2 reduced [adrenodoxin] + O2 + 2 H(+) = aldosterone + 2 oxidized [adrenodoxin] + 2 H2O. It carries out the reaction 21-hydroxyprogesterone + 2 reduced [adrenodoxin] + O2 + 2 H(+) = 19-hydroxy-11-deoxycorticosterone + 2 oxidized [adrenodoxin] + H2O. The catalysed reaction is 19-hydroxy-11-deoxycorticosterone + 2 reduced [adrenodoxin] + O2 + 2 H(+) = 19-oxo-11-deoxycorticosterone + 2 oxidized [adrenodoxin] + 2 H2O. Its pathway is steroid biosynthesis; glucocorticoid biosynthesis. It participates in steroid hormone biosynthesis. Functionally, a cytochrome P450 monooxygenase that catalyzes the biosynthesis of aldosterone and other adrenal corticoids. Differing from other species (such as human, rat and mice), it is able to catalyze three sequential oxidative reactions of 11-deoxycorticosterone (21-hydroxyprogesterone), namely 11-beta hydroxylation, followed by two successive oxidations at C18 yielding 18-hydroxy and then 18-oxo intermediates, and ending with the formation of aldosterone. Steroid 11beta, 18- and 19-hydroxylase. Mechanistically, uses molecular oxygen inserting one oxygen atom into a substrate and reducing the second into a water molecule. Two electrons are provided by NADPH via a two-protein mitochondrial transfer system comprising flavoprotein FDXR (adrenodoxin/ferredoxin reductase) and nonheme iron-sulfur protein FDX1 or FDX2 (adrenodoxin/ferredoxin). The sequence is that of Cytochrome P450 11B1, mitochondrial (CYP11B1) from Sus scrofa (Pig).